A 284-amino-acid polypeptide reads, in one-letter code: Bifunctional protein FolD (284 aa).

NADP(+) is bound by residues 163 to 165 (GRS), Ser-188, and Ile-229.

Belongs to the tetrahydrofolate dehydrogenase/cyclohydrolase family. As to quaternary structure, homodimer.

The catalysed reaction is (6R)-5,10-methylene-5,6,7,8-tetrahydrofolate + NADP(+) = (6R)-5,10-methenyltetrahydrofolate + NADPH. It carries out the reaction (6R)-5,10-methenyltetrahydrofolate + H2O = (6R)-10-formyltetrahydrofolate + H(+). Its pathway is one-carbon metabolism; tetrahydrofolate interconversion. Functionally, catalyzes the oxidation of 5,10-methylenetetrahydrofolate to 5,10-methenyltetrahydrofolate and then the hydrolysis of 5,10-methenyltetrahydrofolate to 10-formyltetrahydrofolate. The chain is Bifunctional protein FolD from Campylobacter hominis (strain ATCC BAA-381 / DSM 21671 / CCUG 45161 / LMG 19568 / NCTC 13146 / CH001A).